The sequence spans 594 residues: Chitooligosaccharidolytic beta-N-acetylglucosaminidase (594 aa).

The signal sequence occupies residues 1-22; that stretch reads MWSRRIPLFIFGVLVLILSVAA. Intrachain disulfides connect Cys-31–Cys-59 and Cys-36–Cys-55. A glycan (N-linked (GlcNAc...) asparagine) is linked at Asn-164. Active-site charge relay system residues include Asp-249 and His-303. 2 disulfides stabilise this stretch: Cys-316-Cys-373 and Cys-326-Cys-331. Glu-368 acts as the Charge relay system in catalysis. An N-linked (GlcNAc...) asparagine glycan is attached at Asn-375. Disulfide bonds link Cys-478-Cys-491 and Cys-585-Cys-592.

This sequence belongs to the glycosyl hydrolase 20 family. Homodimer.

It catalyses the reaction Hydrolysis of terminal non-reducing N-acetyl-D-hexosamine residues in N-acetyl-beta-D-hexosaminides.. With respect to regulation, inhibited by O-(2-acetamido-2-deoxy-D-glucopyransylidene)-amino-N-phenylcarbamate (PUGNAc). Inhibited by thiabendazole (TMG)-chitotriomycin. Inhibited by 6-(dimethylamino)-2-(2-(((5-methyl-1,3,4-thiadiazol-2-yl)methyl)amino)ethyl)- 1H-benzo[de]isoquinoline-1,3(2H)-dione (Q2), a synthesized non-carbohydrate unsymmetrical dyad of naphthalimide and thiadiazole having a dimethylamino group at C4 of the naphthalimide. Inhibited poorly by N-acetyl-glucosamine (NAG)-thiazoline (NGT), but when the thiazoline ring of NGT is replaced by a bulky substituent such as in compound 1,2-dideoxy-2'-methylamino-alpha-D-glucopyranoso-[2,1-d]-Delta2'-thiazoline (NMAGT), the inhibition constant Ki is lowered 600-fold compared to that of NGT. Inhibited by berberine, berberine analogs thalifendine and palmatine, and berberine derivative SYSU-1, but not by berberine analog tetrahydroberberine. Functionally, hydrolyzes one beta-GlcNAc unit at a time from the non-reducing ends of substrates, with a preference for shorter substrates. The 2-acetamido group and the beta-glycoside bond linkage in the substrate are required for its activity. Active with p-nitrophenyl (pNP)-beta-GlcNAc, pNP-beta-GalNAc and chitooligosaccharides (degree of polymerization from 2 to 6), but not with the complex N-glycan substrate (GlcNAcbeta-1,2Manalpha-1,6)(GlcNAcbeta-1,2Manalpha-1,3)Manbeta-1,4GlcNAcbeta-1,4GlcNAc-PA (GnGn-PA), pNP-alpha-GlcNAc or with the long polymer colloidal chitin. Involved in chitin catabolism. Involved in the degradation of old cuticle during the pupation stage. This is Chitooligosaccharidolytic beta-N-acetylglucosaminidase from Ostrinia furnacalis (Asian corn borer).